We begin with the raw amino-acid sequence, 406 residues long: MADGIISVSYLSKIENNQVVPSEEVLRLLCQRLGINNILKNRQDELTSKLLLWYKTITDKNRQEAARMYEEIKRTFDDVQGAESIAYFLLFEMRYHLLLKDIHTVEALLIKLRELYDTFDDVMKYYYYKFLGLLYYCKEKYEDALEYYKKAEQRFRSQSFEKWEEADLHYLLALVYSRLWRILGCINYAQHALAIYQSEYDLKRSAECHILLGICYRRYGEVDQAIECYSLAHKIAQIINDTELLGTIEHNLGYLMSMKHEHYEAIQHYKKSLLYKRNSSLQARFITLFSLIKEYYVSKNYKKALANVEESLQLLKREKDGMTTYYEYYLHFTVYQYLLSEDISENEFETFMKDRVLPYFQRFKKYEDVAQYAEYLAIYYEKRHKYKLASKFYKMSYQFLKNMINI.

TPR repeat units follow at residues 125–158 (YYYY…FRSQ), 206–239 (AECH…AQII), 246–279 (GTIE…KRNS), and 285–318 (FITL…LKRE).

Its function is as follows. Activates the transcription of nprS by about five fold. May bind to the upstream region of nprS promoter. In Geobacillus stearothermophilus (Bacillus stearothermophilus), this protein is Transcriptional activator NprA (nprA).